A 287-amino-acid polypeptide reads, in one-letter code: Protease HtpX (287 aa).

Helical transmembrane passes span 4 to 24 (VMLF…VLNI) and 36 to 56 (LSGL…ISLM). H143 contacts Zn(2+). Residue E144 is part of the active site. H147 provides a ligand contact to Zn(2+). 2 consecutive transmembrane segments (helical) span residues 158-178 (LMQG…ANIV) and 192-212 (MVYF…ASFI). Zn(2+) is bound at residue E221.

This sequence belongs to the peptidase M48B family. Requires Zn(2+) as cofactor.

The protein resides in the cell inner membrane. This is Protease HtpX from Vibrio atlanticus (strain LGP32) (Vibrio splendidus (strain Mel32)).